The sequence spans 1439 residues: Gag-Pol polyprotein (1439 aa).

Glycine 2 is lipidated: N-myristoyl glycine; by host. Residues 7–31 (VLSGGELDRWEKIRLRPGGKKKYRL) are interaction with Gp41. Residues 8 to 43 (LSGGELDRWEKIRLRPGGKKKYRLKHIVWASRELER) form an interaction with host CALM1 region. The tract at residues 12–19 (ELDRWEKI) is interaction with host AP3D1. The segment at 14–33 (DRWEKIRLRPGGKKKYRLKH) is interaction with membrane phosphatidylinositol 4,5-bisphosphate and RNA. The Nuclear export signal motif lies at 16–22 (WEKIRLR). Residues 26-32 (KKKYRLK) carry the Nuclear localization signal motif. The tract at residues 73-77 (EELTS) is interaction with membrane phosphatidylinositol 4,5-bisphosphate. The tract at residues 106–128 (EEQTKSMKKAQQAAADTGNSSQV) is disordered. At tyrosine 132 the chain carries Phosphotyrosine; by host. The interaction with human PPIA/CYPA and NUP153 stretch occupies residues 189-227 (NTVGGHQAAMQMLKETINEEAAEWDRLHPVHAGPIAPGQ). The interval 277–363 (YSPVSILDIR…GGPGHKARVL (87 aa)) is dimerization/Multimerization of capsid protein p24. 2 consecutive CCHC-type zinc fingers follow at residues 390–407 (VKCFNCGKEGHIARNCRA) and 411–428 (KGCWKCGKEGHQMKECTE). A dimerization of protease region spans residues 493 to 497 (PQITL). Residues 512–581 (KEALLDTGAD…TPVNIIGRNL (70 aa)) form the Peptidase A2 domain. The active-site For protease activity; shared with dimeric partner is the aspartate 517. Dimerization of protease regions lie at residues 541–547 (GIGGFIK) and 580–592 (NLLTQIGCTLNFP). Residues 635–825 (EGKISKIGPE…PPFLWMGYEL (191 aa)) enclose the Reverse transcriptase domain. Mg(2+)-binding residues include aspartate 701, aspartate 776, and aspartate 777. Residues 818-826 (FLWMGYELH) are RT 'primer grip'. The Tryptophan repeat motif motif lies at 989-1005 (WETWWTEYWQATWIPEW). The RNase H type-1 domain occupies 1025-1148 (IVGAETFYVD…VDKLVSAGIR (124 aa)). Mg(2+)-binding residues include aspartate 1034, glutamate 1069, aspartate 1089, and aspartate 1140. The Integrase-type zinc-finger motif lies at 1154–1195 (DGIDKAQEDHEKYHSNWRAMASDFNLPPIVAKEIVASCDKCQ). Zn(2+) contacts are provided by histidine 1163, histidine 1167, cysteine 1191, and cysteine 1194. Residues 1205–1355 (VDCSPGIWQL…SAGERIIDII (151 aa)) form the Integrase catalytic domain. Positions 1215, 1267, and 1303 each coordinate Mg(2+). The segment at residues 1374–1421 (FRVYYRDNRDPIWKGPAKLLWKGEGAVVIQDNSDIKVVPRRKVKIIRD) is a DNA-binding region (integrase-type).

Homotrimer; further assembles as hexamers of trimers. Interacts with gp41 (via C-terminus). Interacts with host CALM1; this interaction induces a conformational change in the Matrix protein, triggering exposure of the myristate group. Interacts with host AP3D1; this interaction allows the polyprotein trafficking to multivesicular bodies during virus assembly. Part of the pre-integration complex (PIC) which is composed of viral genome, matrix protein, Vpr and integrase. In terms of assembly, homodimer; the homodimer further multimerizes as homohexamers or homopentamers. Interacts with human PPIA/CYPA; This interaction stabilizes the capsid. Interacts with human NUP153. Interacts with host PDZD8; this interaction stabilizes the capsid. Interacts with monkey TRIM5; this interaction destabilizes the capsid. As to quaternary structure, homodimer, whose active site consists of two apposed aspartic acid residues. Heterodimer of p66 RT and p51 RT (RT p66/p51). Heterodimerization of RT is essential for DNA polymerase activity. The overall folding of the subdomains is similar in p66 RT and p51 RT but the spatial arrangements of the subdomains are dramatically different. In terms of assembly, homotetramer; may further associate as a homohexadecamer. Part of the pre-integration complex (PIC) which is composed of viral genome, matrix protein, Vpr and integrase. Interacts with human SMARCB1/INI1 and human PSIP1/LEDGF isoform 1. Interacts with human KPNA3; this interaction might play a role in nuclear import of the pre-integration complex. Interacts with human NUP153; this interaction might play a role in nuclear import of the pre-integration complex. Mg(2+) serves as cofactor. Post-translationally, specific enzymatic cleavages by the viral protease yield mature proteins. The protease is released by autocatalytic cleavage. The polyprotein is cleaved during and after budding, this process is termed maturation. Proteolytic cleavage of p66 RT removes the RNase H domain to yield the p51 RT subunit. Nucleocapsid protein p7 might be further cleaved after virus entry. In terms of processing, tyrosine phosphorylated presumably in the virion by a host kinase. Phosphorylation is apparently not a major regulator of membrane association. Phosphorylated possibly by host MAPK1; this phosphorylation is necessary for Pin1-mediated virion uncoating. Post-translationally, methylated by host PRMT6, impairing its function by reducing RNA annealing and the initiation of reverse transcription.

The protein localises to the host cell membrane. The protein resides in the host endosome. It localises to the host multivesicular body. Its subcellular location is the virion membrane. It is found in the host nucleus. The protein localises to the host cytoplasm. The protein resides in the virion. The enzyme catalyses Specific for a P1 residue that is hydrophobic, and P1' variable, but often Pro.. It carries out the reaction Endohydrolysis of RNA in RNA/DNA hybrids. Three different cleavage modes: 1. sequence-specific internal cleavage of RNA. Human immunodeficiency virus type 1 and Moloney murine leukemia virus enzymes prefer to cleave the RNA strand one nucleotide away from the RNA-DNA junction. 2. RNA 5'-end directed cleavage 13-19 nucleotides from the RNA end. 3. DNA 3'-end directed cleavage 15-20 nucleotides away from the primer terminus.. It catalyses the reaction 3'-end directed exonucleolytic cleavage of viral RNA-DNA hybrid.. The catalysed reaction is DNA(n) + a 2'-deoxyribonucleoside 5'-triphosphate = DNA(n+1) + diphosphate. With respect to regulation, protease: The viral protease is inhibited by many synthetic protease inhibitors (PIs), such as amprenavir, atazanavir, indinavir, loprinavir, nelfinavir, ritonavir and saquinavir. Use of protease inhibitors in tritherapy regimens permit more ambitious therapeutic strategies. Reverse transcriptase/ribonuclease H: RT can be inhibited either by nucleoside RT inhibitors (NRTIs) or by non nucleoside RT inhibitors (NNRTIs). NRTIs act as chain terminators, whereas NNRTIs inhibit DNA polymerization by binding a small hydrophobic pocket near the RT active site and inducing an allosteric change in this region. Classical NRTIs are abacavir, adefovir (PMEA), didanosine (ddI), lamivudine (3TC), stavudine (d4T), tenofovir (PMPA), zalcitabine (ddC), and zidovudine (AZT). Classical NNRTIs are atevirdine (BHAP U-87201E), delavirdine, efavirenz (DMP-266), emivirine (I-EBU), and nevirapine (BI-RG-587). The tritherapies used as a basic effective treatment of AIDS associate two NRTIs and one NNRTI. Functionally, mediates, with Gag polyprotein, the essential events in virion assembly, including binding the plasma membrane, making the protein-protein interactions necessary to create spherical particles, recruiting the viral Env proteins, and packaging the genomic RNA via direct interactions with the RNA packaging sequence (Psi). Gag-Pol polyprotein may regulate its own translation, by the binding genomic RNA in the 5'-UTR. At low concentration, the polyprotein would promote translation, whereas at high concentration, the polyprotein would encapsidate genomic RNA and then shut off translation. Its function is as follows. Targets the polyprotein to the plasma membrane via a multipartite membrane-binding signal, that includes its myristoylated N-terminus. Matrix protein is part of the pre-integration complex. Implicated in the release from host cell mediated by Vpu. Binds to RNA. In terms of biological role, forms the conical core that encapsulates the genomic RNA-nucleocapsid complex in the virion. Most core are conical, with only 7% tubular. The core is constituted by capsid protein hexamer subunits. The core is disassembled soon after virion entry. Host restriction factors such as TRIM5-alpha or TRIMCyp bind retroviral capsids and cause premature capsid disassembly, leading to blocks in reverse transcription. Capsid restriction by TRIM5 is one of the factors which restricts HIV-1 to the human species. Host PIN1 apparently facilitates the virion uncoating. On the other hand, interactions with PDZD8 or CYPA stabilize the capsid. Encapsulates and protects viral dimeric unspliced genomic RNA (gRNA). Binds these RNAs through its zinc fingers. Acts as a nucleic acid chaperone which is involved in rearangement of nucleic acid secondary structure during gRNA retrotranscription. Also facilitates template switch leading to recombination. As part of the polyprotein, participates in gRNA dimerization, packaging, tRNA incorporation and virion assembly. Functionally, aspartyl protease that mediates proteolytic cleavages of Gag and Gag-Pol polyproteins during or shortly after the release of the virion from the plasma membrane. Cleavages take place as an ordered, step-wise cascade to yield mature proteins. This process is called maturation. Displays maximal activity during the budding process just prior to particle release from the cell. Also cleaves Nef and Vif, probably concomitantly with viral structural proteins on maturation of virus particles. Hydrolyzes host EIF4GI and PABP1 in order to shut off the capped cellular mRNA translation. The resulting inhibition of cellular protein synthesis serves to ensure maximal viral gene expression and to evade host immune response. Also mediates cleavage of host YTHDF3. Mediates cleavage of host CARD8, thereby activating the CARD8 inflammasome, leading to the clearance of latent HIV-1 in patient CD4(+) T-cells after viral reactivation; in contrast, HIV-1 can evade CARD8-sensing when its protease remains inactive in infected cells prior to viral budding. Its function is as follows. Multifunctional enzyme that converts the viral RNA genome into dsDNA in the cytoplasm, shortly after virus entry into the cell. This enzyme displays a DNA polymerase activity that can copy either DNA or RNA templates, and a ribonuclease H (RNase H) activity that cleaves the RNA strand of RNA-DNA heteroduplexes in a partially processive 3' to 5' endonucleasic mode. Conversion of viral genomic RNA into dsDNA requires many steps. A tRNA(3)-Lys binds to the primer-binding site (PBS) situated at the 5'-end of the viral RNA. RT uses the 3' end of the tRNA primer to perform a short round of RNA-dependent minus-strand DNA synthesis. The reading proceeds through the U5 region and ends after the repeated (R) region which is present at both ends of viral RNA. The portion of the RNA-DNA heteroduplex is digested by the RNase H, resulting in a ssDNA product attached to the tRNA primer. This ssDNA/tRNA hybridizes with the identical R region situated at the 3' end of viral RNA. This template exchange, known as minus-strand DNA strong stop transfer, can be either intra- or intermolecular. RT uses the 3' end of this newly synthesized short ssDNA to perform the RNA-dependent minus-strand DNA synthesis of the whole template. RNase H digests the RNA template except for two polypurine tracts (PPTs) situated at the 5'-end and near the center of the genome. It is not clear if both polymerase and RNase H activities are simultaneous. RNase H probably can proceed both in a polymerase-dependent (RNA cut into small fragments by the same RT performing DNA synthesis) and a polymerase-independent mode (cleavage of remaining RNA fragments by free RTs). Secondly, RT performs DNA-directed plus-strand DNA synthesis using the PPTs that have not been removed by RNase H as primers. PPTs and tRNA primers are then removed by RNase H. The 3' and 5' ssDNA PBS regions hybridize to form a circular dsDNA intermediate. Strand displacement synthesis by RT to the PBS and PPT ends produces a blunt ended, linear dsDNA copy of the viral genome that includes long terminal repeats (LTRs) at both ends. In terms of biological role, catalyzes viral DNA integration into the host chromosome, by performing a series of DNA cutting and joining reactions. This enzyme activity takes place after virion entry into a cell and reverse transcription of the RNA genome in dsDNA. The first step in the integration process is 3' processing. This step requires a complex comprising the viral genome, matrix protein, Vpr and integrase. This complex is called the pre-integration complex (PIC). The integrase protein removes 2 nucleotides from each 3' end of the viral DNA, leaving recessed CA OH's at the 3' ends. In the second step, the PIC enters cell nucleus. This process is mediated through integrase and Vpr proteins, and allows the virus to infect a non dividing cell. This ability to enter the nucleus is specific of lentiviruses, other retroviruses cannot and rely on cell division to access cell chromosomes. In the third step, termed strand transfer, the integrase protein joins the previously processed 3' ends to the 5' ends of strands of target cellular DNA at the site of integration. The 5'-ends are produced by integrase-catalyzed staggered cuts, 5 bp apart. A Y-shaped, gapped, recombination intermediate results, with the 5'-ends of the viral DNA strands and the 3' ends of target DNA strands remaining unjoined, flanking a gap of 5 bp. The last step is viral DNA integration into host chromosome. This involves host DNA repair synthesis in which the 5 bp gaps between the unjoined strands are filled in and then ligated. Since this process occurs at both cuts flanking the HIV genome, a 5 bp duplication of host DNA is produced at the ends of HIV-1 integration. Alternatively, Integrase may catalyze the excision of viral DNA just after strand transfer, this is termed disintegration. The polypeptide is Gag-Pol polyprotein (gag-pol) (Human immunodeficiency virus type 1 group M subtype B (isolate JRCSF) (HIV-1)).